The sequence spans 91 residues: Potassium channel toxin MeuTXK-beta-1 (91 aa).

The first 19 residues, 1-19, serve as a signal peptide directing secretion; the sequence is MQRNLVVLLFLGMVALSSC. Positions 54-91 constitute a BetaSPN-type CS-alpha/beta domain; sequence QFGCPAYQGYCDDHCQDIEKKEGFCHGFKCKCGIPMGF. Disulfide bonds link Cys57–Cys78, Cys64–Cys83, and Cys68–Cys85.

Expressed by the venom gland.

It localises to the secreted. In terms of biological role, has a low affinity binding to potassium channels of rat brain synaptosomes. Displays weak antibacterial activity against Stenotrophomonas sp. Strongly inhibits the development of the Plasmodium berghei ookinetes. Displays slight hemolytic effect on mouse erythrocytes. Induces cytolysis on Xenopus oocytes at high concentrations. Is not toxic towards mice and towards the insect Tenebrio molitor. The protein is Potassium channel toxin MeuTXK-beta-1 of Mesobuthus eupeus (Lesser Asian scorpion).